Consider the following 377-residue polypeptide: Guanine nucleotide-binding protein subunit beta (377 aa).

7 WD repeats span residues 63–93, 105–135, 154–185, 202–233, 246–276, 292–323, and 339–369; these read GHTG…IVWN, LPCA…SIFS, GHRG…ILWD, GHTA…RLWD, GHEG…RLYD, GENG…YVWD, and SHRN…KIWA. 2 short sequence motifs (DWD box) span residues 220 to 235 and 263 to 278; these read FISG…WDTR and FGTG…YDIR.

This sequence belongs to the WD repeat G protein beta family. G proteins are composed of 3 units, alpha, beta and gamma. Interacts with the gamma subunits GG1 and GG2. The dimers GB1-GG1 and GB1-GG2 interact with NDL1, NDL2 and NDL3. Interacts with WNK8. Interacts with XLG2. Interacts with RACK1A, RACK1B and RACK1C. Interacts with ZAR1 (via GBeta-binding domain). In terms of tissue distribution, expressed in seedlings (especially at the hypocotyl/root junction), roots, leaves (restricted to veins and guard cells), and flowers. Also present in hydathods. Expressed in guard cells, mesophyll tissue of cotyledons, trichomes and whole siliques, but not in seeds.

It is found in the cell membrane. The protein resides in the cytoplasm. It localises to the nucleus. Its function is as follows. Guanine nucleotide-binding proteins (G proteins) are involved as a modulator or transducer in various transmembrane signaling systems. The beta and gamma chains are required for the GTPase activity, for replacement of GDP by GTP, and for G protein-effector interaction. The heterotrimeric G-protein controls defense responses to necrotrophic and vascular fungi probably by modulating cell wall-related genes expression (e.g. lower xylose content in cell walls); involved in resistance to fungal pathogens such as Alternaria brassicicola and Fusarium oxysporum. Modulates root architecture (e.g. lateral root formation). Acts with XGL3 in the positive regulation of root waving and root skewing. Involved in the asymmetric division of zygote and specification of apical and basal cell lineages. The polypeptide is Guanine nucleotide-binding protein subunit beta (GB1) (Arabidopsis thaliana (Mouse-ear cress)).